We begin with the raw amino-acid sequence, 98 residues long: Large ribosomal subunit protein bL21 (98 aa).

Belongs to the bacterial ribosomal protein bL21 family. In terms of assembly, part of the 50S ribosomal subunit. Contacts protein L20.

Functionally, this protein binds to 23S rRNA in the presence of protein L20. In Aquifex aeolicus (strain VF5), this protein is Large ribosomal subunit protein bL21.